The primary structure comprises 312 residues: Acetyl-coenzyme A carboxylase carboxyl transferase subunit beta (312 aa).

Residues 24–293 enclose the CoA carboxyltransferase N-terminal domain; it reads LWIKCPDSGQ…PHADEVAAPP (270 aa). The tract at residues 286-312 is disordered; sequence ADEVAAPPPPDVEGPPPAAEPVALPPA. Pro residues predominate over residues 291–312; sequence APPPPDVEGPPPAAEPVALPPA.

The protein belongs to the AccD/PCCB family. In terms of assembly, acetyl-CoA carboxylase is a heterohexamer composed of biotin carboxyl carrier protein (AccB), biotin carboxylase (AccC) and two subunits each of ACCase subunit alpha (AccA) and ACCase subunit beta (AccD).

It localises to the cytoplasm. It carries out the reaction N(6)-carboxybiotinyl-L-lysyl-[protein] + acetyl-CoA = N(6)-biotinyl-L-lysyl-[protein] + malonyl-CoA. It functions in the pathway lipid metabolism; malonyl-CoA biosynthesis; malonyl-CoA from acetyl-CoA: step 1/1. Functionally, component of the acetyl coenzyme A carboxylase (ACC) complex. Biotin carboxylase (BC) catalyzes the carboxylation of biotin on its carrier protein (BCCP) and then the CO(2) group is transferred by the transcarboxylase to acetyl-CoA to form malonyl-CoA. This is Acetyl-coenzyme A carboxylase carboxyl transferase subunit beta from Afipia carboxidovorans (strain ATCC 49405 / DSM 1227 / KCTC 32145 / OM5) (Oligotropha carboxidovorans).